The primary structure comprises 365 residues: Carbamoyl phosphate synthase small chain (365 aa).

CPSase stretches follow at residues 1-166 and 1-169; these read MKRQ…PSPG and MKRQ…GRGH. Residues Ser45, Gly218, and Gly220 each contribute to the L-glutamine site. The region spanning 170 to 357 is the Glutamine amidotransferase type-1 domain; that stretch reads RVVLVDFGMK…LTMIENFKKE (188 aa). Cys245 functions as the Nucleophile in the catalytic mechanism. Residues Leu246, Gln249, Asn287, Gly289, and Tyr290 each contribute to the L-glutamine site. Residues His330 and Glu332 contribute to the active site.

It belongs to the CarA family. In terms of assembly, composed of two chains; the small (or glutamine) chain promotes the hydrolysis of glutamine to ammonia, which is used by the large (or ammonia) chain to synthesize carbamoyl phosphate. Tetramer of heterodimers (alpha,beta)4.

It carries out the reaction hydrogencarbonate + L-glutamine + 2 ATP + H2O = carbamoyl phosphate + L-glutamate + 2 ADP + phosphate + 2 H(+). It catalyses the reaction L-glutamine + H2O = L-glutamate + NH4(+). It functions in the pathway amino-acid biosynthesis; L-arginine biosynthesis; carbamoyl phosphate from bicarbonate: step 1/1. The protein operates within pyrimidine metabolism; UMP biosynthesis via de novo pathway; (S)-dihydroorotate from bicarbonate: step 1/3. Small subunit of the glutamine-dependent carbamoyl phosphate synthetase (CPSase). CPSase catalyzes the formation of carbamoyl phosphate from the ammonia moiety of glutamine, carbonate, and phosphate donated by ATP, constituting the first step of 2 biosynthetic pathways, one leading to arginine and/or urea and the other to pyrimidine nucleotides. The small subunit (glutamine amidotransferase) binds and cleaves glutamine to supply the large subunit with the substrate ammonia. This chain is Carbamoyl phosphate synthase small chain, found in Bacillus anthracis.